Here is a 152-residue protein sequence, read N- to C-terminus: Superoxide dismutase [Cu-Zn] (152 aa).

S2 bears the N-acetylserine mark. Residues H44, H46, and H61 each contribute to the Cu cation site. Residues C55 and C144 are joined by a disulfide bond. Zn(2+) contacts are provided by H61, H69, H78, and D81. H118 provides a ligand contact to Cu cation.

Belongs to the Cu-Zn superoxide dismutase family. Monomer. Requires Cu cation as cofactor. It depends on Zn(2+) as a cofactor.

It is found in the cytoplasm. It catalyses the reaction 2 superoxide + 2 H(+) = H2O2 + O2. Its activity is regulated as follows. Inhibited by KCN and diethyldithiocarbamate. Functionally, destroys radicals which are normally produced within the cells and which are toxic to biological systems. The plasma superoxide dismutase has phagocytosis-stimulating activity and may play an important role in the biological defenses of the organism. This chain is Superoxide dismutase [Cu-Zn], found in Halocynthia roretzi (Sea squirt).